A 308-amino-acid chain; its full sequence is Ribosomal RNA large subunit methyltransferase F (308 aa).

The protein belongs to the methyltransferase superfamily. METTL16/RlmF family.

Its subcellular location is the cytoplasm. It carries out the reaction adenosine(1618) in 23S rRNA + S-adenosyl-L-methionine = N(6)-methyladenosine(1618) in 23S rRNA + S-adenosyl-L-homocysteine + H(+). In terms of biological role, specifically methylates the adenine in position 1618 of 23S rRNA. This Escherichia coli (strain K12 / MC4100 / BW2952) protein is Ribosomal RNA large subunit methyltransferase F.